A 356-amino-acid polypeptide reads, in one-letter code: uncharacterized protein (356 aa).

Helical transmembrane passes span 2 to 22 (FEAI…FHRL), 36 to 56 (YVTV…VPIF), 77 to 97 (MFYT…IGDY), 99 to 119 (IITA…GPFL), 124 to 144 (IISL…LSLI), and 154 to 174 (LFLI…FVDI). Residues 218-353 (QSLGLLLIDI…GRNQVMFNPI (136 aa)) enclose the GGDEF domain.

Its subcellular location is the cell membrane. This is an uncharacterized protein from Staphylococcus saprophyticus subsp. saprophyticus (strain ATCC 15305 / DSM 20229 / NCIMB 8711 / NCTC 7292 / S-41).